We begin with the raw amino-acid sequence, 269 residues long: Protein-L-isoaspartate O-methyltransferase (269 aa).

Positions 1–53 (MSAGQRPAPKFPLRLDQVKPAGRSGAAPLLRPQRPLHQAATERGRGTTPAGLG) are disordered. Residue serine 113 is part of the active site.

Belongs to the methyltransferase superfamily. L-isoaspartyl/D-aspartyl protein methyltransferase family.

It is found in the cytoplasm. It carries out the reaction [protein]-L-isoaspartate + S-adenosyl-L-methionine = [protein]-L-isoaspartate alpha-methyl ester + S-adenosyl-L-homocysteine. Its function is as follows. Catalyzes the methyl esterification of L-isoaspartyl residues in peptides and proteins that result from spontaneous decomposition of normal L-aspartyl and L-asparaginyl residues. It plays a role in the repair and/or degradation of damaged proteins. This Methylibium petroleiphilum (strain ATCC BAA-1232 / LMG 22953 / PM1) protein is Protein-L-isoaspartate O-methyltransferase.